Reading from the N-terminus, the 461-residue chain is uncharacterized protein (461 aa).

3 LRR repeats span residues 119-140 (NVKK…EKMS), 141-162 (LLEV…QHCK), and 163-184 (NLKE…EYLK). Residues 197–237 (NPCVGEGGQEYRRKVIRVLPNLTKLDDKPVTTTDHQEAIED) form the LRRCT domain.

This is an uncharacterized protein from Caenorhabditis elegans.